The sequence spans 220 residues: Small ribosomal subunit protein uS3c (220 aa).

Positions Val48 to Asp119 constitute a KH type-2 domain.

The protein belongs to the universal ribosomal protein uS3 family. In terms of assembly, part of the 30S ribosomal subunit.

The protein resides in the plastid. It is found in the chloroplast. The sequence is that of Small ribosomal subunit protein uS3c (rps3) from Psilotum nudum (Whisk fern).